The primary structure comprises 369 residues: GDSL esterase/lipase At5g41890 (369 aa).

The Nucleophile role is filled by S32. Catalysis depends on residues D334 and H337.

It belongs to the 'GDSL' lipolytic enzyme family.

The sequence is that of GDSL esterase/lipase At5g41890 from Arabidopsis thaliana (Mouse-ear cress).